The sequence spans 95 residues: Aspartyl/glutamyl-tRNA(Asn/Gln) amidotransferase subunit C (95 aa).

This sequence belongs to the GatC family. As to quaternary structure, heterotrimer of A, B and C subunits.

The enzyme catalyses L-glutamyl-tRNA(Gln) + L-glutamine + ATP + H2O = L-glutaminyl-tRNA(Gln) + L-glutamate + ADP + phosphate + H(+). It carries out the reaction L-aspartyl-tRNA(Asn) + L-glutamine + ATP + H2O = L-asparaginyl-tRNA(Asn) + L-glutamate + ADP + phosphate + 2 H(+). Functionally, allows the formation of correctly charged Asn-tRNA(Asn) or Gln-tRNA(Gln) through the transamidation of misacylated Asp-tRNA(Asn) or Glu-tRNA(Gln) in organisms which lack either or both of asparaginyl-tRNA or glutaminyl-tRNA synthetases. The reaction takes place in the presence of glutamine and ATP through an activated phospho-Asp-tRNA(Asn) or phospho-Glu-tRNA(Gln). The chain is Aspartyl/glutamyl-tRNA(Asn/Gln) amidotransferase subunit C from Cereibacter sphaeroides (strain ATCC 17025 / ATH 2.4.3) (Rhodobacter sphaeroides).